We begin with the raw amino-acid sequence, 287 residues long: 4-hydroxybenzoate octaprenyltransferase (287 aa).

9 helical membrane-spanning segments follow: residues Phe7 to Trp27, Leu30 to Val50, Val94 to Phe114, Leu118 to Met138, Val142 to Ile162, Trp167 to Val187, Val209 to Leu229, Tyr235 to Ser255, and Phe266 to Val286.

It belongs to the UbiA prenyltransferase family. Mg(2+) serves as cofactor.

It localises to the cell inner membrane. The catalysed reaction is all-trans-octaprenyl diphosphate + 4-hydroxybenzoate = 4-hydroxy-3-(all-trans-octaprenyl)benzoate + diphosphate. It functions in the pathway cofactor biosynthesis; ubiquinone biosynthesis. Catalyzes the prenylation of para-hydroxybenzoate (PHB) with an all-trans polyprenyl group. Mediates the second step in the final reaction sequence of ubiquinone-8 (UQ-8) biosynthesis, which is the condensation of the polyisoprenoid side chain with PHB, generating the first membrane-bound Q intermediate 3-octaprenyl-4-hydroxybenzoate. This is 4-hydroxybenzoate octaprenyltransferase from Polynucleobacter necessarius subsp. necessarius (strain STIR1).